A 251-amino-acid chain; its full sequence is 3-deoxy-manno-octulosonate cytidylyltransferase (251 aa).

This sequence belongs to the KdsB family.

Its subcellular location is the cytoplasm. The enzyme catalyses 3-deoxy-alpha-D-manno-oct-2-ulosonate + CTP = CMP-3-deoxy-beta-D-manno-octulosonate + diphosphate. The protein operates within nucleotide-sugar biosynthesis; CMP-3-deoxy-D-manno-octulosonate biosynthesis; CMP-3-deoxy-D-manno-octulosonate from 3-deoxy-D-manno-octulosonate and CTP: step 1/1. It functions in the pathway bacterial outer membrane biogenesis; lipopolysaccharide biosynthesis. Activates KDO (a required 8-carbon sugar) for incorporation into bacterial lipopolysaccharide in Gram-negative bacteria. This chain is 3-deoxy-manno-octulosonate cytidylyltransferase, found in Rhizobium leguminosarum bv. trifolii (strain WSM2304).